Here is a 232-residue protein sequence, read N- to C-terminus: tRNA (guanine-N(7)-)-methyltransferase (232 aa).

Residues E38, D63, E90, and D113 each coordinate S-adenosyl-L-methionine. The active site involves D113. Residues K117 and D149 each contribute to the substrate site.

The protein belongs to the class I-like SAM-binding methyltransferase superfamily. TrmB family.

It catalyses the reaction guanosine(46) in tRNA + S-adenosyl-L-methionine = N(7)-methylguanosine(46) in tRNA + S-adenosyl-L-homocysteine. The protein operates within tRNA modification; N(7)-methylguanine-tRNA biosynthesis. Catalyzes the formation of N(7)-methylguanine at position 46 (m7G46) in tRNA. In Syntrophotalea carbinolica (strain DSM 2380 / NBRC 103641 / GraBd1) (Pelobacter carbinolicus), this protein is tRNA (guanine-N(7)-)-methyltransferase.